Reading from the N-terminus, the 378-residue chain is MSFEGKTITCKAAVAWGAKEPLSIEDIQVAPPKAHEVRVKVDWSAVCHTDAYTLSGVDPEGAFPIVLGHEGAGIVESIGEGVINVRPGDHVILLYTPECKECKFCRSGKTNLCSKIRETQGRGLMPDGTSRFSCRDKTLLHYMGCSSFSQYTVVADISLVAISHSAPLRSICLLGCGVTTGFGAVTHSAKVESGSTVAVVGCGCVGLAAMQGAVAAGASRIIAIDINADKEVYAKKFGATDFIDSSKVKDLVQYVIDVTDGGVDYAFDCTGNVTVMQQELQFCHKGWGKLCVIGVAAAGKTLDFRPFLVVTGRQVLGSAFGGVKGRSELPNFVDEYMQGHFKVDEYITNEEPLKNINKAFDHMHEGKCIRCVVDMNKP.

Zn(2+) is bound at residue Cys-47. His-48 is an NAD(+) binding site. Zn(2+) is bound by residues His-69, Glu-70, Cys-99, Cys-102, Cys-105, Cys-113, and Cys-176. Residues 201-206 (GCGCVG), Asp-225, 293-295 (IGV), and 318-320 (SAF) contribute to the NAD(+) site.

Belongs to the zinc-containing alcohol dehydrogenase family. Class-III subfamily. It depends on Zn(2+) as a cofactor.

The enzyme catalyses a primary alcohol + NAD(+) = an aldehyde + NADH + H(+). It carries out the reaction a secondary alcohol + NAD(+) = a ketone + NADH + H(+). It catalyses the reaction S-(hydroxymethyl)glutathione + NADP(+) = S-formylglutathione + NADPH + H(+). The catalysed reaction is S-(hydroxymethyl)glutathione + NAD(+) = S-formylglutathione + NADH + H(+). The enzyme catalyses S-nitrosoglutathione + NADH + H(+) = S-(hydroxysulfenamide)glutathione + NAD(+). Its function is as follows. Oxidizes long-chain alcohols and, in the presence of glutathione, is able to oxidize formaldehyde. Also acts as a S-nitroso-glutathione reductase by catalyzing the NADH-dependent reduction of S-nitrosoglutathione, thereby regulating protein S-nitrosylation. The chain is Probable S-(hydroxymethyl)glutathione dehydrogenase 1 from Schizosaccharomyces pombe (strain 972 / ATCC 24843) (Fission yeast).